Consider the following 169-residue polypeptide: MYKYLQVGKIVNTFGLKGEVKVIPLTDEVDRFSELEYVLLEDNLSTKLTIERYRVKDNIVIIKFKEISSIDEAQKLKNRYIVIERERAKKLPKDTYFICDIIGLEVYDLDGRKLGRIKDVLKTGSNDVYICDSYIGKKDILIPALKEIVKEVNIEEGYMKIKVVEGLLD.

One can recognise a PRC barrel domain in the interval 92-167 (PKDTYFICDI…YMKIKVVEGL (76 aa)).

The protein belongs to the RimM family. As to quaternary structure, binds ribosomal protein uS19.

It localises to the cytoplasm. Functionally, an accessory protein needed during the final step in the assembly of 30S ribosomal subunit, possibly for assembly of the head region. Essential for efficient processing of 16S rRNA. May be needed both before and after RbfA during the maturation of 16S rRNA. It has affinity for free ribosomal 30S subunits but not for 70S ribosomes. This Caldicellulosiruptor bescii (strain ATCC BAA-1888 / DSM 6725 / KCTC 15123 / Z-1320) (Anaerocellum thermophilum) protein is Ribosome maturation factor RimM.